Consider the following 134-residue polypeptide: Holo-[acyl-carrier-protein] synthase (134 aa).

Residues Asp8 and Glu57 each coordinate Mg(2+).

The protein belongs to the P-Pant transferase superfamily. AcpS family. Mg(2+) is required as a cofactor.

It localises to the cytoplasm. The enzyme catalyses apo-[ACP] + CoA = holo-[ACP] + adenosine 3',5'-bisphosphate + H(+). Transfers the 4'-phosphopantetheine moiety from coenzyme A to a Ser of acyl-carrier-protein. In Rhizobium etli (strain ATCC 51251 / DSM 11541 / JCM 21823 / NBRC 15573 / CFN 42), this protein is Holo-[acyl-carrier-protein] synthase.